The sequence spans 376 residues: Flagellar P-ring protein 2 (376 aa).

The N-terminal stretch at 1-19 is a signal peptide; it reads MTRLLLALILVVSAASAQA.

This sequence belongs to the FlgI family. The basal body constitutes a major portion of the flagellar organelle and consists of four rings (L,P,S, and M) mounted on a central rod.

The protein localises to the periplasm. It is found in the bacterial flagellum basal body. Functionally, assembles around the rod to form the L-ring and probably protects the motor/basal body from shearing forces during rotation. The chain is Flagellar P-ring protein 2 from Bradyrhizobium diazoefficiens (strain JCM 10833 / BCRC 13528 / IAM 13628 / NBRC 14792 / USDA 110).